Reading from the N-terminus, the 619-residue chain is Probable ATP-dependent RNA helicase DDX59 (619 aa).

Lys-26 is covalently cross-linked (Glycyl lysine isopeptide (Lys-Gly) (interchain with G-Cter in SUMO2)). The tract at residues 57-98 (SESCPFPSPGGQLAEVHSVSPEQGAKDSHPSEEPVKSFSKTQ) is disordered. Ser-64 and Ser-76 each carry phosphoserine. Positions 80-91 (GAKDSHPSEEPV) are enriched in basic and acidic residues. Residues 104–133 (GEPICVVCGRYGEYICDKTDEDVCSLECKA) form an HIT-type zinc finger. The segment at 142-161 (KEEKSKLSNPQKADSEPESP) is disordered. A phosphoserine mark is found at Ser-156 and Ser-160. Positions 203–231 (IDFEHCSLPEVLNHNLKKSGYEVPTPIQM) match the Q motif motif. The 172-residue stretch at 234-405 (IPVGLLGRDI…SQLLHNPVRI (172 aa)) folds into the Helicase ATP-binding domain. 247-254 (ADTGSGKT) contacts ATP. Residues 353–356 (DEAD) carry the DEAD box motif. The 164-residue stretch at 416–579 (NVRQIILWVE…ILPPQLLNSP (164 aa)) folds into the Helicase C-terminal domain.

Belongs to the DEAD box helicase family. DDX59 subfamily. As to quaternary structure, interacts (via HIT-type zinc finger) with the RUVBL1/RUVBL2 complex in the presence of ADP. In terms of tissue distribution, expressed in fibroblasts (at protein level).

Its subcellular location is the cytoplasm. The protein localises to the nucleus. It carries out the reaction ATP + H2O = ADP + phosphate + H(+). This chain is Probable ATP-dependent RNA helicase DDX59 (DDX59), found in Homo sapiens (Human).